Consider the following 232-residue polypeptide: Putative ABC transporter ATP-binding protein VNG_2317G (232 aa).

The ABC transporter domain occupies 2–231 (LSVRNLVHRY…GALPDAGVRP (230 aa)). 34-41 (GANGSGKT) is an ATP binding site.

It belongs to the ABC transporter superfamily.

The protein resides in the cell membrane. In terms of biological role, probably part of an ABC transporter complex. Responsible for energy coupling to the transport system. In Halobacterium salinarum (strain ATCC 700922 / JCM 11081 / NRC-1) (Halobacterium halobium), this protein is Putative ABC transporter ATP-binding protein VNG_2317G.